A 345-amino-acid chain; its full sequence is Biotin synthase (345 aa).

The Radical SAM core domain maps to 38–256; that stretch reads QQVQVSTLLS…IAVARIMMPS (219 aa). [4Fe-4S] cluster-binding residues include Cys-53, Cys-57, and Cys-60. Residues Cys-97, Cys-128, Cys-188, and Arg-260 each coordinate [2Fe-2S] cluster.

The protein belongs to the radical SAM superfamily. Biotin synthase family. In terms of assembly, homodimer. The cofactor is [4Fe-4S] cluster. [2Fe-2S] cluster is required as a cofactor.

The enzyme catalyses (4R,5S)-dethiobiotin + (sulfur carrier)-SH + 2 reduced [2Fe-2S]-[ferredoxin] + 2 S-adenosyl-L-methionine = (sulfur carrier)-H + biotin + 2 5'-deoxyadenosine + 2 L-methionine + 2 oxidized [2Fe-2S]-[ferredoxin]. It participates in cofactor biosynthesis; biotin biosynthesis; biotin from 7,8-diaminononanoate: step 2/2. In terms of biological role, catalyzes the conversion of dethiobiotin (DTB) to biotin by the insertion of a sulfur atom into dethiobiotin via a radical-based mechanism. This chain is Biotin synthase, found in Photorhabdus laumondii subsp. laumondii (strain DSM 15139 / CIP 105565 / TT01) (Photorhabdus luminescens subsp. laumondii).